The primary structure comprises 331 residues: Nucleotide sugar transporter SLC35B4 (331 aa).

A run of 11 helical transmembrane segments spans residues 4 to 24 (ALAV…LELL), 30 to 50 (GCGN…GFLF), 59 to 79 (PAIP…VSVV), 92 to 112 (LHMI…IIIL), 117 to 137 (SIFK…CTFM), 153 to 173 (GFQA…ALLM), 201 to 221 (ALPL…AVLF), 229 to 249 (IPVI…NIIT), 251 to 267 (YVCI…CASL), 268 to 288 (TVTL…ILYF), and 291 to 311 (PFTL…LMYT). The short motif at 326–331 (KDSKKN) is the Mediates endoplasmic reticulum retention element.

Belongs to the nucleotide-sugar transporter family. SLC35B subfamily.

It is found in the endoplasmic reticulum membrane. It carries out the reaction UDP-N-acetyl-alpha-D-glucosamine(in) + UDP-alpha-D-glucuronate(out) = UDP-N-acetyl-alpha-D-glucosamine(out) + UDP-alpha-D-glucuronate(in). It catalyses the reaction UDP-alpha-D-xylose(in) + UDP-alpha-D-glucuronate(out) = UDP-alpha-D-xylose(out) + UDP-alpha-D-glucuronate(in). Functionally, antiporter that transports nucleotide sugars across the endoplasmic reticulum (ER) membrane in exchange for another nucleotide sugar. May couple UDP-alpha-D-glucuronate (UDP-GlcA) or UDP-alpha-D-xylose (UDP-Xyl) efflux to UDP-alpha-D-glucuronate (UDP-GlcA) influx into the ER lumen, which in turn stimulates glucuronidation and excretion of endobiotics and xenobiotics. Its function is as follows. Has UDP-GlcA:UDP-GlcNAc antiporter activity. In Homo sapiens (Human), this protein is Nucleotide sugar transporter SLC35B4 (SLC35B4).